Consider the following 69-residue polypeptide: Large ribosomal subunit protein bL31 (69 aa).

This sequence belongs to the bacterial ribosomal protein bL31 family. Type A subfamily. In terms of assembly, part of the 50S ribosomal subunit.

Binds the 23S rRNA. The polypeptide is Large ribosomal subunit protein bL31 (Mycoplasmopsis pulmonis (strain UAB CTIP) (Mycoplasma pulmonis)).